Here is a 289-residue protein sequence, read N- to C-terminus: ATP synthase gamma chain (289 aa).

This sequence belongs to the ATPase gamma chain family. As to quaternary structure, F-type ATPases have 2 components, CF(1) - the catalytic core - and CF(0) - the membrane proton channel. CF(1) has five subunits: alpha(3), beta(3), gamma(1), delta(1), epsilon(1). CF(0) has three main subunits: a, b and c.

The protein resides in the cell inner membrane. In terms of biological role, produces ATP from ADP in the presence of a proton gradient across the membrane. The gamma chain is believed to be important in regulating ATPase activity and the flow of protons through the CF(0) complex. The chain is ATP synthase gamma chain from Cereibacter sphaeroides (strain ATCC 17025 / ATH 2.4.3) (Rhodobacter sphaeroides).